We begin with the raw amino-acid sequence, 327 residues long: DNA-directed RNA polymerase subunit alpha (327 aa).

The segment at M1–E233 is alpha N-terminal domain (alpha-NTD). An alpha C-terminal domain (alpha-CTD) region spans residues L267–K327.

The protein belongs to the RNA polymerase alpha chain family. In plastids the minimal PEP RNA polymerase catalytic core is composed of four subunits: alpha, beta, beta', and beta''. When a (nuclear-encoded) sigma factor is associated with the core the holoenzyme is formed, which can initiate transcription.

It is found in the plastid. It localises to the chloroplast. It carries out the reaction RNA(n) + a ribonucleoside 5'-triphosphate = RNA(n+1) + diphosphate. Its function is as follows. DNA-dependent RNA polymerase catalyzes the transcription of DNA into RNA using the four ribonucleoside triphosphates as substrates. The polypeptide is DNA-directed RNA polymerase subunit alpha (Lepidium virginicum (Virginia pepperweed)).